Consider the following 175-residue polypeptide: MMTYFVFILSTVFVIGFVGFSSKPSPVYGGVGLIISGGVGCGIVMNFSGSFLGLMVFLIYLGGMMVVFGYTAAMAMELYPEVWISNKVVLGAFVSGLFMEMLLVLYVLKEGSVGSMFEFSSLGDWVVYDVEDSGFFSKEVVGISSLYSYGVWLVVVTGWSLFIAVVVIMEVTRGG.

5 helical membrane-spanning segments follow: residues 1-21, 27-47, 49-69, 88-108, and 149-169; these read MMTY…VGFS, VYGG…VMNF, GSFL…VVFG, VVLG…LYVL, and YGVW…VVIM.

It belongs to the complex I subunit 6 family. Core subunit of respiratory chain NADH dehydrogenase (Complex I) which is composed of 45 different subunits.

The protein resides in the mitochondrion inner membrane. It carries out the reaction a ubiquinone + NADH + 5 H(+)(in) = a ubiquinol + NAD(+) + 4 H(+)(out). Core subunit of the mitochondrial membrane respiratory chain NADH dehydrogenase (Complex I) which catalyzes electron transfer from NADH through the respiratory chain, using ubiquinone as an electron acceptor. Essential for the catalytic activity and assembly of complex I. In Pteropus dasymallus (Ryukyu flying fox), this protein is NADH-ubiquinone oxidoreductase chain 6 (MT-ND6).